A 134-amino-acid chain; its full sequence is Large ribosomal subunit protein uL16c (134 aa).

The tract at residues methionine 1–histidine 22 is disordered.

Belongs to the universal ribosomal protein uL16 family. Part of the 50S ribosomal subunit.

Its subcellular location is the plastid. It localises to the chloroplast. The chain is Large ribosomal subunit protein uL16c from Nicotiana tabacum (Common tobacco).